Consider the following 155-residue polypeptide: Protein-export protein SecB (155 aa).

It belongs to the SecB family. In terms of assembly, homotetramer, a dimer of dimers. One homotetramer interacts with 1 SecA dimer.

It localises to the cytoplasm. One of the proteins required for the normal export of preproteins out of the cell cytoplasm. It is a molecular chaperone that binds to a subset of precursor proteins, maintaining them in a translocation-competent state. It also specifically binds to its receptor SecA. This chain is Protein-export protein SecB, found in Paramagnetospirillum magneticum (strain ATCC 700264 / AMB-1) (Magnetospirillum magneticum).